Here is a 134-residue protein sequence, read N- to C-terminus: ATP synthase epsilon chain, chloroplastic (134 aa).

The protein belongs to the ATPase epsilon chain family. As to quaternary structure, F-type ATPases have 2 components, CF(1) - the catalytic core - and CF(0) - the membrane proton channel. CF(1) has five subunits: alpha(3), beta(3), gamma(1), delta(1), epsilon(1). CF(0) has three main subunits: a, b and c.

The protein resides in the plastid. It localises to the chloroplast thylakoid membrane. Produces ATP from ADP in the presence of a proton gradient across the membrane. In Gracilaria tenuistipitata var. liui (Red alga), this protein is ATP synthase epsilon chain, chloroplastic.